Here is a 380-residue protein sequence, read N- to C-terminus: Glutamate 5-kinase (380 aa).

Residue K15 coordinates ATP. The substrate site is built by S59, D146, and N158. ATP is bound at residue 178 to 179 (TD). In terms of domain architecture, PUA spans 285-363 (RGSVTVDAGA…AEFERLLGYA (79 aa)).

This sequence belongs to the glutamate 5-kinase family.

The protein localises to the cytoplasm. The catalysed reaction is L-glutamate + ATP = L-glutamyl 5-phosphate + ADP. It functions in the pathway amino-acid biosynthesis; L-proline biosynthesis; L-glutamate 5-semialdehyde from L-glutamate: step 1/2. Its function is as follows. Catalyzes the transfer of a phosphate group to glutamate to form L-glutamate 5-phosphate. The protein is Glutamate 5-kinase of Acidovorax ebreus (strain TPSY) (Diaphorobacter sp. (strain TPSY)).